The following is a 224-amino-acid chain: uncharacterized protein (224 aa).

The N-terminal stretch at 1–19 (MLRHITFTVFITTSMNTLA) is a signal peptide.

It belongs to the periplasmic pilus chaperone family.

Its subcellular location is the periplasm. Functionally, could be required for the biogenesis of a putative fimbria. This is an uncharacterized protein from Escherichia coli (strain K12).